Reading from the N-terminus, the 506-residue chain is MEEFQGYLELDRYQQHDFLYPLIFREYIYALAHDHGLNRSILLDNVGYDTKYSLLIIKRLISRMYQQNHLIISANDSNQNQFFGYNKNLYSQMMSEGFAVIVEIPFSLRLVSSLEATEIVKSYNLRSIHSIFPFLEDKFPHLNYVSDVLIPYPIHLEILVQTLRYWVKDPSSLHLLRFFLHEYYNWNSLITPKKIIFSKSNPRLFLLLYNSHVCEYESILLFLRNQSSHLRLTSSGIFFERIHFYEKKKYPVPVEKVFVNDFPAAILWFFKDPFMHYVRYQGKSILSSKDTPLLMNKWKYYLVNLWQCHSYVWSQPGRIYINQLSKHSLDFLGYFSSMRPNLSVVRGQMLENSFIMDNAMKKLDTLVPIIPLIGSLAKVKFCNALGHPISKSTWADSSDFDIIDRFVHICRNLSHYYSGSSRKKSLYRIKYILRLSCVKTLARKHKSTVRTFLKRLGYKLLDEFFTEEEQILSLIFPRASYTLKKFYRGRIWYLDIFCINDLVNHE.

This sequence belongs to the intron maturase 2 family. MatK subfamily.

It localises to the plastid. It is found in the chloroplast. Functionally, usually encoded in the trnK tRNA gene intron. Probably assists in splicing its own and other chloroplast group II introns. This is Maturase K from Crataegus monogyna (Hawthorn).